Here is a 327-residue protein sequence, read N- to C-terminus: Phenylalanine--tRNA ligase alpha subunit (327 aa).

Glu-252 is a binding site for Mg(2+).

This sequence belongs to the class-II aminoacyl-tRNA synthetase family. Phe-tRNA synthetase alpha subunit type 1 subfamily. Tetramer of two alpha and two beta subunits. Mg(2+) is required as a cofactor.

The protein localises to the cytoplasm. The enzyme catalyses tRNA(Phe) + L-phenylalanine + ATP = L-phenylalanyl-tRNA(Phe) + AMP + diphosphate + H(+). This chain is Phenylalanine--tRNA ligase alpha subunit, found in Pectobacterium atrosepticum (strain SCRI 1043 / ATCC BAA-672) (Erwinia carotovora subsp. atroseptica).